An 814-amino-acid polypeptide reads, in one-letter code: DNA ligase (814 aa).

NAD(+) is bound by residues 46 to 50 (DAEYD), 95 to 96 (SL), and Glu-129. Lys-131 acts as the N6-AMP-lysine intermediate in catalysis. NAD(+)-binding residues include Arg-152, Glu-189, Lys-305, and Lys-329. 4 residues coordinate Zn(2+): Cys-434, Cys-437, Cys-458, and Cys-464. Residues 525 to 548 (LSAQRRSEGEPAPKKPTKKKGEEE) are disordered. Residues 735–814 (TSAAAFAGKT…DDWLAMLAEA (80 aa)) enclose the BRCT domain.

It belongs to the NAD-dependent DNA ligase family. LigA subfamily. The cofactor is Mg(2+). It depends on Mn(2+) as a cofactor.

It catalyses the reaction NAD(+) + (deoxyribonucleotide)n-3'-hydroxyl + 5'-phospho-(deoxyribonucleotide)m = (deoxyribonucleotide)n+m + AMP + beta-nicotinamide D-nucleotide.. DNA ligase that catalyzes the formation of phosphodiester linkages between 5'-phosphoryl and 3'-hydroxyl groups in double-stranded DNA using NAD as a coenzyme and as the energy source for the reaction. It is essential for DNA replication and repair of damaged DNA. The chain is DNA ligase from Methylorubrum extorquens (strain PA1) (Methylobacterium extorquens).